We begin with the raw amino-acid sequence, 170 residues long: MKTQRDGPSLGRWSLVLLLLGLTMPLAITAQVLSYQEAVLRAVDGLNQRSLDANLYRLLNLDPRPTLDGDPDTPKPVSFTVKETVCPRTIQRSPEECDFKKDGLVKRCVGTVILNQARDSFDISCDKDERKVARLGGFLQKAREKIARGFKKIGQKINDFLGKLAPRTEA.

Positions 1–30 are cleaved as a signal peptide; that stretch reads MKTQRDGPSLGRWSLVLLLLGLTMPLAITA. A propeptide spans 31–131 (cathelin-like domain (CLD)); that stretch reads QVLSYQEAVL…DISCDKDERK (101 aa). 2 cysteine pairs are disulfide-bonded: cysteine 86-cysteine 97 and cysteine 108-cysteine 125. Residues 150 to 162 form an active core region; the sequence is FKKIGQKINDFLG.

It belongs to the cathelicidin family. As to quaternary structure, monomer, homodimer or homotrimer (in vitro). Oligomerizes as tetra- or hexamer in solution (in vitro). In terms of processing, proteolytically cleaved by proteinase PRTN3 into antibacterial peptide LL-37. Proteolytically cleaved by cathepsin CTSG and neutrophil elastase ELANE. Resistant to proteolytic degradation in solution, and when bound to both zwitterionic (mimicking mammalian membranes) and negatively charged membranes (mimicking bacterial membranes). Post-translationally, after secretion onto the skin surface, the CAMP gene product is processed by a serine protease-dependent mechanism into multiple novel antimicrobial peptides distinct from and shorter than cathelicidin LL-37. These peptides show enhanced antimicrobial action, acquiring the ability to kill skin pathogens such as S.aureus, E.coli and C.albicans. These peptides have lost the ability to stimulate CXCL8/IL8 release from keratinocytes. The peptides act synergistically, killing bacteria at lower concentrations when present together, and maintain activity at increased salt condition.

The protein resides in the secreted. Its subcellular location is the vesicle. Antimicrobial protein that is an integral component of the innate immune system. Binds to bacterial lipopolysaccharides (LPS). Acts via neutrophil N-formyl peptide receptors to enhance the release of CXCL2. Postsecretory processing generates multiple cathelicidin antimicrobial peptides with various lengths which act as a topical antimicrobial defense in sweat on skin. The unprocessed precursor form, cathelicidin antimicrobial peptide, inhibits the growth of Gram-negative E.coli and E.aerogenes with efficiencies comparable to that of the mature peptide LL-37 (in vitro). Its function is as follows. Antimicrobial peptide that is an integral component of the innate immune system. Binds to bacterial lipopolysaccharides (LPS). Causes membrane permeabilization by forming transmembrane pores (in vitro). Causes lysis of E.coli. Exhibits antimicrobial activity against Gram-negative bacteria such as P.aeruginosa, S.typhimurium, E.aerogenes, E.coli and P.syringae, Gram-positive bacteria such as L.monocytogenes, S.epidermidis, S.pyogenes and S.aureus, as well as vancomycin-resistant enterococci (in vitro). Exhibits antimicrobial activity against methicillin-resistant S.aureus, P.mirabilis, and C.albicans in low-salt media, but not in media containing 100 mM NaCl (in vitro). Forms chiral supramolecular assemblies with quinolone signal (PQS) molecules of P.aeruginosa, which may lead to interference of bacterial quorum signaling and perturbance of bacterial biofilm formation. May form supramolecular fiber-like assemblies on bacterial membranes. Induces cytokine and chemokine producation as well as TNF/TNFA and CSF2/GMCSF production in normal human keratinocytes. Exhibits hemolytic activity against red blood cells. Functionally, exhibits antimicrobial activity against E.coli and B.megaterium (in vitro). This is Cathelicidin antimicrobial peptide from Cebus capucinus (White-faced sapajou).